The chain runs to 353 residues: 6-phosphogluconolactonase (353 aa).

It belongs to the cycloisomerase 2 family.

It localises to the cytoplasm. The enzyme catalyses 6-phospho-D-glucono-1,5-lactone + H2O = 6-phospho-D-gluconate + H(+). Its pathway is carbohydrate degradation; pentose phosphate pathway; D-ribulose 5-phosphate from D-glucose 6-phosphate (oxidative stage): step 2/3. Carboxylic ester hydrolase that may be involved in ulvan degradation. Ulvan is the main polysaccharide component of the Ulvales (green seaweed) cell wall. It is composed of disaccharide building blocks comprising 3-sulfated rhamnose (Rha3S) linked to D-glucuronic acid (GlcA), L-iduronic acid (IduA), or D-xylose (Xyl). Catalyzes the hydrolysis of 6-phosphogluconolactone to 6-phosphogluconate. This is 6-phosphogluconolactonase (pgl) from Formosa agariphila (strain DSM 15362 / KCTC 12365 / LMG 23005 / KMM 3901 / M-2Alg 35-1).